The primary structure comprises 671 residues: DNA ligase (671 aa).

NAD(+) is bound by residues 32-36 (DAEYD), 81-82 (SL), and Glu-113. Lys-115 acts as the N6-AMP-lysine intermediate in catalysis. NAD(+) contacts are provided by Arg-136, Glu-173, Lys-290, and Lys-314. Zn(2+)-binding residues include Cys-408, Cys-411, Cys-426, and Cys-432. A BRCT domain is found at 593-671 (EIDSPFAGKT…EAEMIRLLGA (79 aa)).

Belongs to the NAD-dependent DNA ligase family. LigA subfamily. Requires Mg(2+) as cofactor. Mn(2+) is required as a cofactor.

It catalyses the reaction NAD(+) + (deoxyribonucleotide)n-3'-hydroxyl + 5'-phospho-(deoxyribonucleotide)m = (deoxyribonucleotide)n+m + AMP + beta-nicotinamide D-nucleotide.. DNA ligase that catalyzes the formation of phosphodiester linkages between 5'-phosphoryl and 3'-hydroxyl groups in double-stranded DNA using NAD as a coenzyme and as the energy source for the reaction. It is essential for DNA replication and repair of damaged DNA. The chain is DNA ligase from Salmonella choleraesuis (strain SC-B67).